We begin with the raw amino-acid sequence, 688 residues long: Elongation factor G (688 aa).

The 275-residue stretch at 8 to 282 (ERTRNIGIMA…AVLDYLPAPT (275 aa)) folds into the tr-type G domain. GTP is bound by residues 17-24 (AHIDAGKT), 81-85 (DTPGH), and 135-138 (NKMD).

This sequence belongs to the TRAFAC class translation factor GTPase superfamily. Classic translation factor GTPase family. EF-G/EF-2 subfamily.

It is found in the cytoplasm. Its function is as follows. Catalyzes the GTP-dependent ribosomal translocation step during translation elongation. During this step, the ribosome changes from the pre-translocational (PRE) to the post-translocational (POST) state as the newly formed A-site-bound peptidyl-tRNA and P-site-bound deacylated tRNA move to the P and E sites, respectively. Catalyzes the coordinated movement of the two tRNA molecules, the mRNA and conformational changes in the ribosome. The chain is Elongation factor G from Clostridioides difficile (strain 630) (Peptoclostridium difficile).